We begin with the raw amino-acid sequence, 127 residues long: Fluoride-specific ion channel FluC (127 aa).

2 consecutive transmembrane segments (helical) span residues 4–24 (WFWI…LSTW) and 36–56 (GTLA…EIAA). Na(+)-binding residues include G75 and T78. The chain crosses the membrane as a helical span at residues 100 to 120 (LANIAITLVVCLLAGVLGMVV).

The protein belongs to the fluoride channel Fluc/FEX (TC 1.A.43) family.

The protein localises to the cell inner membrane. It carries out the reaction fluoride(in) = fluoride(out). With respect to regulation, na(+) is not transported, but it plays an essential structural role and its presence is essential for fluoride channel function. Its function is as follows. Fluoride-specific ion channel. Important for reducing fluoride concentration in the cell, thus reducing its toxicity. This is Fluoride-specific ion channel FluC from Sorangium cellulosum (strain So ce56) (Polyangium cellulosum (strain So ce56)).